A 384-amino-acid polypeptide reads, in one-letter code: Chaperone protein DnaJ 1 (384 aa).

Positions 4 to 68 (DYYGLLGVAR…EKRRIVDMGG (65 aa)) constitute a J domain. The CR-type zinc finger occupies 133-215 (GVTKHLTVDT…CGGDGRVRAR (83 aa)). Residues C146, C149, C163, C166, C189, C192, C203, and C206 each contribute to the Zn(2+) site. CXXCXGXG motif repeat units lie at residues 146-153 (CDACHGSG), 163-170 (CETCGGAG), 189-196 (CPTCRGAG), and 203-210 (CHKCGGDG).

This sequence belongs to the DnaJ family. Homodimer. Requires Zn(2+) as cofactor.

It localises to the cytoplasm. Participates actively in the response to hyperosmotic and heat shock by preventing the aggregation of stress-denatured proteins and by disaggregating proteins, also in an autonomous, DnaK-independent fashion. Unfolded proteins bind initially to DnaJ; upon interaction with the DnaJ-bound protein, DnaK hydrolyzes its bound ATP, resulting in the formation of a stable complex. GrpE releases ADP from DnaK; ATP binding to DnaK triggers the release of the substrate protein, thus completing the reaction cycle. Several rounds of ATP-dependent interactions between DnaJ, DnaK and GrpE are required for fully efficient folding. Also involved, together with DnaK and GrpE, in the DNA replication of plasmids through activation of initiation proteins. The protein is Chaperone protein DnaJ 1 of Nocardia farcinica (strain IFM 10152).